The chain runs to 249 residues: 2,3-bisphosphoglycerate-dependent phosphoglycerate mutase (249 aa).

Residues 8 to 15 (RHGQSAWN), 21 to 22 (TG), Arg-60, 87 to 90 (ERHY), Lys-98, 114 to 115 (RR), and 183 to 184 (GN) contribute to the substrate site. The Tele-phosphohistidine intermediate role is filled by His-9. Glu-87 acts as the Proton donor/acceptor in catalysis. The segment at 115–137 (RSYDTPPPPLPADDPRSPAGDAR) is disordered.

This sequence belongs to the phosphoglycerate mutase family. BPG-dependent PGAM subfamily. As to quaternary structure, homodimer.

The enzyme catalyses (2R)-2-phosphoglycerate = (2R)-3-phosphoglycerate. The protein operates within carbohydrate degradation; glycolysis; pyruvate from D-glyceraldehyde 3-phosphate: step 3/5. Catalyzes the interconversion of 2-phosphoglycerate and 3-phosphoglycerate. This is 2,3-bisphosphoglycerate-dependent phosphoglycerate mutase from Nitratidesulfovibrio vulgaris (strain DSM 19637 / Miyazaki F) (Desulfovibrio vulgaris).